Reading from the N-terminus, the 261-residue chain is Calbindin (261 aa).

At alanine 2 the chain carries N-acetylalanine. The interval 2–7 (AESHLQ) is interaction with RANBP9. 5 EF-hand domains span residues 11–46 (ITASQFFEIWLHFDADGSGYLEGKELQNLIQELLQA), 53–88 (ELSPEMKTFVDQYGQRDDGKIGIVELAHVLPTEENF), 98–133 (KSCEEFMKTWRKYDTDHSGFIETEELKNFLKDLLEK), 142–177 (KLAEYTDLMLKLFDSNNDGKLELTEMARLLPVQENF), and 186–221 (MCGKEFNKAFELYDQDGNGYIDENELDALLKDLCEK). Ca(2+) is bound by residues aspartate 24, aspartate 26, serine 28, tyrosine 30, and glutamate 35. Ca(2+) is bound by residues aspartate 111, aspartate 113, serine 115, glutamate 122, aspartate 155, asparagine 157, aspartate 159, lysine 161, glutamate 166, aspartate 199, aspartate 201, asparagine 203, tyrosine 205, and glutamate 210.

This sequence belongs to the calbindin family. As to quaternary structure, interacts with RANBP9.

In terms of biological role, buffers cytosolic calcium. May stimulate a membrane Ca(2+)-ATPase and a 3',5'-cyclic nucleotide phosphodiesterase. The chain is Calbindin (Calb1) from Rattus norvegicus (Rat).